A 101-amino-acid chain; its full sequence is Chaperone modulatory protein CbpM (101 aa).

It belongs to the CbpM family.

Interacts with CbpA and inhibits both the DnaJ-like co-chaperone activity and the DNA binding activity of CbpA. Together with CbpA, modulates the activity of the DnaK chaperone system. Does not inhibit the co-chaperone activity of DnaJ. The protein is Chaperone modulatory protein CbpM of Pseudomonas putida (strain ATCC 47054 / DSM 6125 / CFBP 8728 / NCIMB 11950 / KT2440).